The primary structure comprises 257 residues: Protein YIPF5 (257 aa).

The Cytoplasmic segment spans residues 1-124 (MSGFENLNTD…KVADGSIMNE (124 aa)). Positions 75–106 (PASPQPFYGNSFEDEPPLLEELGINFDHIWQK) are interaction with Sec23. Residues 125 to 145 (TDLAGPMVFCLAFGATLLLAG) traverse the membrane as a helical segment. Lysine 146 is a topological domain (lumenal). The helical transmembrane segment at 147 to 167 (IQFGYVYGISAIGCLGMFCLL) threads the bilayer. The Cytoplasmic portion of the chain corresponds to 168–173 (NLMSMT). The chain crosses the membrane as a helical span at residues 174–194 (GVSFGCVASVLGYCLLPMILL). The Lumenal segment spans residues 195 to 196 (SS). A helical membrane pass occupies residues 197–217 (FAVIFSLQGMVGIILTAGIIG). The Cytoplasmic segment spans residues 218-236 (WCSFSASKIFISALAMEGQ). A helical transmembrane segment spans residues 237-257 (QLLVAYPCALLYGVFALISVF).

It belongs to the YIP1 family. As to quaternary structure, interacts with the COPII coat components Sec23 (SEC23A and/or SEC23B) and Sec24 (SEC24A and/or SEC24B). Interacts with YIF1A. May interact with RAB1A. Interacts with YIPF3 and YIPF4.

Its subcellular location is the endoplasmic reticulum membrane. The protein localises to the golgi apparatus. It localises to the cis-Golgi network membrane. It is found in the cytoplasmic vesicle. The protein resides in the COPII-coated vesicle. Its function is as follows. Plays a role in transport between endoplasmic reticulum and Golgi. In pancreatic beta cells, required to transport proinsulin from endoplasmic reticulum into the Golgi. The protein is Protein YIPF5 (YIPF5) of Macaca fascicularis (Crab-eating macaque).